The chain runs to 1318 residues: MSAEQRKKKKTTTTTQGRGAEVAMADEDGGRLRAAAETTGGPGSPDPADGPPPTPNPDRRPAARPGFGWHGGPEENEDEADDAAADADADEAAPASGEAVDEPAADGVVSPRQLALLASMVDEAVRTIPSPPPERDGAQEEAARSPSPPRTPSMRADYGEENDDDDDDDDDDDRDAGRWVRGPETTSAVRGAYPDPMASLSPRPPAPRRHHHHHHHRRRRAPRRRSAASDSSKSGSSSSASSASSSASSSSSASASSSDDDDDDDAARAPASAADHAAGGTLGADDEEAGVPARAPGAAPRPSPPRAEPAPARTPAATAGRLERRRARAAVAGRDATGRFTAGRPRRVELDADAASGAFYARYRDGYVSGEPWPGAGPPPPGRVLYGGLGDSRPGLWGAPEAEEARARFEASGAPAPVWAPELGDAAQQYALITRLLYTPDAEAMGWLQNPRVAPGDVALDQACFRISGAARNSSSFISGSVARAVPHLGYAMAAGRFGWGLAHVAAAVAMSRRYDRAQKGFLLTSLRRAYAPLLARENAALTGARTPDDGGDANRHDGDDARGKPAAAAAPLPSAAASPADERAVPAGYGAAGVLAALGRLSAAPASAPAGADDDDDDDGAGGGGGGRRAEAGRVAVECLAACRGILEALAEGFDGDLAAVPGLAGARPAAPPRPGPAGAAAPPHADAPRLRAWLRELRFVRDALVLMRLRGDLRVAGGSEAAVAAVRAVSLVAGALGPALPRSPRLLSSAAAAAADLLFQNQSLRPLLADTVAAADSLAAPASAPREARKRKSPAPARAPPGGAPRPPKKSRADAPRPAAAPPAGAAPPAPPTPPPRPPRPAALTRRPAEGPDPQGGWRRQPPGPSHTPAPSAAALEAYCAPRAVAELTDHPLFPAPWRPALMFDPRALASLAARCAAPPPGGAPAAFGPLRASGPLRRAAAWMRQVPDPEDVRVVILYSPLPGEDLAAGRAGGGPPPEWSAERGGLSCLLAALGNRLCGPATAAWAGNWTGAPDVSALGAQGVLLLSTRDLAFAGAVEFLGLLAGACDRRLIVVNAVRAADWPADGPVVSRQHAYLACEVLPAVQCAVRWPAARDLRRTVLASGRVFGPGVFARVEAAHARLYPDAPPLRLCRGANVRYRVRTRFGPDTLVPMSPREYRRAVLPALDGRAAASGAGDAMAPGAPDFCEDEAHSHRACARWGLGAPLRPVYVALGRDAVRGGPAELRGPRREFCARALLEPDGDAPPLVLRDDADAGPPPQIRWASAAGRAGTVLAAAGGGVEVVGTAAGLATPPRREPVDMDAELEDDDDGLFGE.

Positions 1–11 are enriched in basic residues; that stretch reads MSAEQRKKKKT. Disordered stretches follow at residues 1–108, 123–324, 542–580, 606–630, 780–873, and 1291–1318; these read MSAE…ADGV, EAVR…RLER, LTGA…AASP, PASA…GGRR, LAAP…TPAP, and AGLA…LFGE. Positions 44-56 are enriched in pro residues; that stretch reads SPDPADGPPPTPN. Acidic residues predominate over residues 74-91; sequence EENEDEADDAAADADADE. Basic and acidic residues predominate over residues 133-143; the sequence is PERDGAQEEAA. The span at 159-174 shows a compositional bias: acidic residues; sequence GEENDDDDDDDDDDDR. The segment covering 206-226 has biased composition (basic residues); sequence APRRHHHHHHHRRRRAPRRRS. Composition is skewed to low complexity over residues 228–257 and 268–278; these read ASDS…SASS and RAPASAADHAA. Pro residues predominate over residues 299–308; it reads APRPSPPRAE. Residues 309–320 show a composition bias toward low complexity; the sequence is PAPARTPAATAG. The DNA-binding element occupies 319 to 547; that stretch reads AGRLERRRAR…ENAALTGART (229 aa). The segment covering 547–564 has biased composition (basic and acidic residues); that stretch reads TPDDGGDANRHDGDDARG. Over residues 566-580 the composition is skewed to low complexity; that stretch reads PAAAAAPLPSAAASP. Composition is skewed to pro residues over residues 799 to 808 and 821 to 843; these read ARAPPGGAPR and AAAP…PPRP. Positions 844-863 are enriched in low complexity; sequence AALTRRPAEGPDPQGGWRRQ. Acidic residues predominate over residues 1303–1318; it reads DMDAELEDDDDGLFGE.

Belongs to the herpesviridae ICP4 family. In terms of assembly, homodimer. Interacts with transcriptional regulator ICP27; this interaction is required for proper incorporation of ICP4 into virions. Interacts with host TBP; theis interaction helps the stabilization of the pre-initiation complex on specific promoters. Interacts with host GTF2B. Post-translationally, ADP-ribosylated. In terms of processing, the long stretch of Ser is a major site of phosphorylation. Only the phosphorylated forms are capable of interacting with beta or gamma genes.

It is found in the host nucleus. The protein resides in the host cytoplasm. Its subcellular location is the virion tegument. Plays an essential role in the regulation of viral gene expression by both activating and repressing host RNA polymerase II-mediated transcription. Binds with high affinity to the sequence 5'-ATCGTC-3'. Activates transcription by recruiting a form of the host TFIID to promoters and stabilizing the pre-initiation complex formation. Negatively regulates its own transcription. This immediate early (IE) protein is absolutely necessary for the transition from IE transcription to later viral gene transcription. In addition, binds to the host promoters of CXCR3 ligands including CXCL9, CXCL10, and CXCL11 and interacts with TBP to activate their transcription. In turn, mediates CD4+ T-cell migration. The sequence is that of Major viral transcription factor ICP4 homolog (ICP4) from Human herpesvirus 2 (strain HG52) (HHV-2).